The following is a 510-amino-acid chain: Gelatinase (510 aa).

The N-terminal stretch at 1–30 (MMKGNKILYILGTGIFVGSSCLFSSLFVAA) is a signal peptide. Positions 31–192 (EEQVYSESEV…IMEKQDLTEH (162 aa)) are excised as a propeptide. Asp324 is a Ca(2+) binding site. His328 contributes to the Zn(2+) binding site. The active site involves Glu329. His332 and Glu352 together coordinate Zn(2+). Ser376 lines the Ca(2+) pocket. Catalysis depends on His419, which acts as the Proton donor.

The protein belongs to the peptidase M4 family.

It is found in the secreted. The enzyme catalyses Preferential cleavage: Xaa-|-Leu, Xaa-|-Phe, Xaa-|-Tyr, Xaa-|-Ala.. Inhibited by L-leucine hydroxamate and phosphoramidon. Not inhibited by phenylmethanesulfonyl fluoride. Reversibly inactivated by straight-chain aliphatic alcohols. Functionally, metalloprotease capable of the hydrolysis of insoluble hydrophobic substrates. Hydrolyzes azocoll and gelatin and, at a lower rate, soluble and insoluble collagens. Does not cleave short synthetic peptides. Preferentially hydrolyzes the 24-Phe-|-Phe-25 bond in the insulin B-chain, followed by the 5-His-|-Leu-6 bond. Inactivates endothelin-1, primarily by cleavage of the 5-Ser-|-Leu-6 and 16-His-|-Leu-17 bonds. Hydrolyzes the alpha chain of C3 to generate a C3b-like protein. Inhibits complement-mediated hemolysis and opsinization of bacteria. Hydrolyzes the insect antimicrobial peptide cecropin. Decreases the length of E.faecalis chains via the activation of autolysin. Degrades polymerized fibrin. The sequence is that of Gelatinase from Enterococcus faecalis (strain ATCC 700802 / V583).